A 495-amino-acid chain; its full sequence is Probable cytosol aminopeptidase (495 aa).

The Mn(2+) site is built by lysine 264 and aspartate 269. Lysine 276 is a catalytic residue. Residues aspartate 287, aspartate 346, and glutamate 348 each contribute to the Mn(2+) site. Residue arginine 350 is part of the active site.

It belongs to the peptidase M17 family. The cofactor is Mn(2+).

It localises to the cytoplasm. It carries out the reaction Release of an N-terminal amino acid, Xaa-|-Yaa-, in which Xaa is preferably Leu, but may be other amino acids including Pro although not Arg or Lys, and Yaa may be Pro. Amino acid amides and methyl esters are also readily hydrolyzed, but rates on arylamides are exceedingly low.. The catalysed reaction is Release of an N-terminal amino acid, preferentially leucine, but not glutamic or aspartic acids.. In terms of biological role, presumably involved in the processing and regular turnover of intracellular proteins. Catalyzes the removal of unsubstituted N-terminal amino acids from various peptides. This chain is Probable cytosol aminopeptidase, found in Geotalea uraniireducens (strain Rf4) (Geobacter uraniireducens).